The following is a 114-amino-acid chain: MKKHLTTFLVILWLYFYRGNGKNQVEQSPQSLIILEGKNCTLQCNYTVSPFSNLRWYKQDTGRGPVSLTIMTFSENTKSNGRYTATLDADTKQSSLHITASQLSDSASYICVVS.

The first 21 residues, 1–21, serve as a signal peptide directing secretion; the sequence is MKKHLTTFLVILWLYFYRGNG. The Ig-like domain occupies 23-114; the sequence is NQVEQSPQSL…DSASYICVVS (92 aa). N-linked (GlcNAc...) asparagine glycans are attached at residues Asn-39 and Asn-45. An intrachain disulfide couples Cys-44 to Cys-111.

As to quaternary structure, alpha-beta TR is a heterodimer composed of an alpha and beta chain; disulfide-linked. The alpha-beta TR is associated with the transmembrane signaling CD3 coreceptor proteins to form the TR-CD3 (TcR or TCR). The assembly of alpha-beta TR heterodimers with CD3 occurs in the endoplasmic reticulum where a single alpha-beta TR heterodimer associates with one CD3D-CD3E heterodimer, one CD3G-CD3E heterodimer and one CD247 homodimer forming a stable octameric structure. CD3D-CD3E and CD3G-CD3E heterodimers preferentially associate with TR alpha and TR beta chains, respectively. The association of the CD247 homodimer is the last step of TcR assembly in the endoplasmic reticulum and is required for transport to the cell surface.

The protein localises to the cell membrane. Functionally, v region of the variable domain of T cell receptor (TR) alpha chain that participates in the antigen recognition. Alpha-beta T cell receptors are antigen specific receptors which are essential to the immune response and are present on the cell surface of T lymphocytes. Recognize peptide-major histocompatibility (MH) (pMH) complexes that are displayed by antigen presenting cells (APC), a prerequisite for efficient T cell adaptive immunity against pathogens. Binding of alpha-beta TR to pMH complex initiates TR-CD3 clustering on the cell surface and intracellular activation of LCK that phosphorylates the ITAM motifs of CD3G, CD3D, CD3E and CD247 enabling the recruitment of ZAP70. In turn ZAP70 phosphorylates LAT, which recruits numerous signaling molecules to form the LAT signalosome. The LAT signalosome propagates signal branching to three major signaling pathways, the calcium, the mitogen-activated protein kinase (MAPK) kinase and the nuclear factor NF-kappa-B (NF-kB) pathways, leading to the mobilization of transcription factors that are critical for gene expression and essential for T cell growth and differentiation. The T cell repertoire is generated in the thymus, by V-(D)-J rearrangement. This repertoire is then shaped by intrathymic selection events to generate a peripheral T cell pool of self-MH restricted, non-autoaggressive T cells. Post-thymic interaction of alpha-beta TR with the pMH complexes shapes TR structural and functional avidity. This Homo sapiens (Human) protein is T cell receptor alpha variable 10.